The sequence spans 260 residues: tRNA (guanine-N(1)-)-methyltransferase (260 aa).

Residues glycine 117 and 137–142 (LGDFVL) contribute to the S-adenosyl-L-methionine site.

Belongs to the RNA methyltransferase TrmD family. Homodimer.

Its subcellular location is the cytoplasm. It carries out the reaction guanosine(37) in tRNA + S-adenosyl-L-methionine = N(1)-methylguanosine(37) in tRNA + S-adenosyl-L-homocysteine + H(+). Functionally, specifically methylates guanosine-37 in various tRNAs. The protein is tRNA (guanine-N(1)-)-methyltransferase of Cupriavidus necator (strain ATCC 17699 / DSM 428 / KCTC 22496 / NCIMB 10442 / H16 / Stanier 337) (Ralstonia eutropha).